A 109-amino-acid chain; its full sequence is Putative double-stranded DNA mimic protein YciU (109 aa).

Belongs to the putative dsDNA mimic protein family.

Functionally, may act as a double-stranded DNA (dsDNA) mimic. Probably regulates the activity of a dsDNA-binding protein. The chain is Putative double-stranded DNA mimic protein YciU from Shigella flexneri.